The chain runs to 446 residues: Exodeoxyribonuclease 7 large subunit (446 aa).

The protein belongs to the XseA family. In terms of assembly, heterooligomer composed of large and small subunits.

It is found in the cytoplasm. It carries out the reaction Exonucleolytic cleavage in either 5'- to 3'- or 3'- to 5'-direction to yield nucleoside 5'-phosphates.. In terms of biological role, bidirectionally degrades single-stranded DNA into large acid-insoluble oligonucleotides, which are then degraded further into small acid-soluble oligonucleotides. In Geotalea uraniireducens (strain Rf4) (Geobacter uraniireducens), this protein is Exodeoxyribonuclease 7 large subunit.